Consider the following 530-residue polypeptide: Inactive ubiquitin carboxyl-terminal hydrolase 17-like protein 8 (530 aa).

The region spanning 80-375 (AGLQNMGNTC…QAYVLFYIQK (296 aa)) is the USP domain. Residues 382 to 392 (SESVSRGREPR) show a composition bias toward basic and acidic residues. 2 disordered regions span residues 382–412 (SESVSRGREPRALGAEDTDRPATQGELKRDH) and 493–530 (NSTDQESMNTGTLASLQGRTRRSKGKNKHSKRSLLVCQ). A compositionally biased stretch (polar residues) spans 495–510 (TDQESMNTGTLASLQG). Residues 511-524 (RTRRSKGKNKHSKR) are compositionally biased toward basic residues.

It belongs to the peptidase C19 family. USP17 subfamily.

It is found in the nucleus. The protein localises to the endoplasmic reticulum. In Homo sapiens (Human), this protein is Inactive ubiquitin carboxyl-terminal hydrolase 17-like protein 8 (USP17L8).